The following is a 782-amino-acid chain: Coiled-coil alpha-helical rod protein 1 (782 aa).

Composition is skewed to basic and acidic residues over residues 62 to 74 and 208 to 218; these read ERDV…EPGR and ETRRAGEAKEL. 2 disordered regions span residues 62 to 82 and 191 to 218; these read ERDV…WGLE and SSLT…AKEL. Coiled-coil stretches lie at residues 82 to 314, 344 to 435, and 498 to 691; these read EGSQ…ELTR, LMVQ…VVNA, and VADV…QQEG.

The protein localises to the cytoplasm. Its subcellular location is the nucleus. May be a regulator of keratinocyte proliferation or differentiation. The sequence is that of Coiled-coil alpha-helical rod protein 1 (CCHCR1) from Pongo pygmaeus (Bornean orangutan).